A 1154-amino-acid chain; its full sequence is Caspase recruitment domain-containing protein 11 (1154 aa).

In terms of domain architecture, CARD spans 18–110 (EEDALWENVE…ELYKLVTGKE (93 aa)). The segment at 111 to 128 (PTRRFSTIVVEEGHEGLT) is linker. A coiled-coil region spans residues 130–449 (FLMNEVIKLQ…KDSNNLDQSL (320 aa)). Residues Ser-448 and Ser-466 each carry the phosphoserine modification. The inhibitory domain (ID) stretch occupies residues 450–666 (PRNLPVTIIS…GHVRGPGPSV (217 aa)). Positions 460-626 (QDFGDASPRT…HSSSSSHQSE (167 aa)) are disordered. Positions 473 to 484 (EADDSSTSEESP) are enriched in acidic residues. Ser-512 carries the post-translational modification Phosphoserine. Residues 518 to 529 (RTSDFQAKGHEE) show a composition bias toward basic and acidic residues. The segment covering 534–562 (ASPSSCGSLPITNSFTKMQPPRSRSSIMS) has biased composition (polar residues). Ser-535 carries the post-translational modification Phosphoserine. Residue Ser-559 is modified to Phosphoserine; by PKC/PRKCB and PKC/PRKCQ. The span at 573–587 (IVRRYKEDAPHRSTV) shows a compositional bias: basic and acidic residues. Ser-593 is subject to Phosphoserine. The span at 614–625 (SSIHSSSSSHQS) shows a compositional bias: low complexity. Ser-644 and Ser-652 each carry phosphoserine; by PKC/PRKCB and PKC/PRKCQ. Residues 667–755 (QHTTLNGDSL…PVTLHYKVNH (89 aa)) form the PDZ domain. Phosphoserine occurs at positions 886 and 925. Residues 973–1140 (RRRPVLFTPT…LLRVVKDKIG (168 aa)) form the Guanylate kinase-like domain.

Homodimer; disulfide-linked. Homomultimer; polymerizes following activation, forming a nucleating helical template that seeds BCL10-filament formation via a CARD-CARD interaction. Interacts (via CARD domain) with BCL10 (via CARD domain); interaction takes place following CARD11 activation and polymerization, leading to the formation of a filamentous CBM complex assembly. Component of a CBM complex (CARD11-BCL10-MALT1) complex involved in NF-kappa-B activation. Found in a membrane raft complex, at least composed of BCL10, CARD11, DPP4 and IKBKB. Interacts (via PDZ domain) with DPP4 (via cytoplasmic tail). In terms of processing, phosphorylation at Ser-559, Ser-644 and Ser-652 by PRKCB and PRKCQ leads to a shift from an inactive to an active form that activates the NF-kappa-B signaling. As to expression, detected in adult peripheral blood leukocytes, thymus, spleen and liver. Also found in promyelocytic leukemia HL-60 cells, chronic myelogenous leukemia K-562 cells, Burkitt's lymphoma Raji cells and colorectal adenocarcinoma SW480 cells. Not detected in HeLaS3, MOLT-4, A-549 and G431 cells.

Its subcellular location is the cytoplasm. It is found in the membrane raft. Its activity is regulated as follows. Maintained in an autoinhibited state via homodimerization in which the CARD domain forms an extensive interaction with the adjacent linker and coiled-coil regions. Activation downstream of T-cell receptor (TCR) by phosphorylation by PRKCB and PRKCQ triggers CARD11 homooligomerization and BCL10 recruitment, followed by activation of NF-kappa-B. Adapter protein that plays a key role in adaptive immune response by transducing the activation of NF-kappa-B downstream of T-cell receptor (TCR) and B-cell receptor (BCR) engagement. Transduces signals downstream TCR or BCR activation via the formation of a multiprotein complex together with BCL10 and MALT1 that induces NF-kappa-B and MAP kinase p38 (MAPK11, MAPK12, MAPK13 and/or MAPK14) pathways. Upon activation in response to TCR or BCR triggering, CARD11 homooligomerizes to form a nucleating helical template that recruits BCL10 via CARD-CARD interaction, thereby promoting polymerization of BCL10 and subsequent recruitment of MALT1: this leads to I-kappa-B kinase (IKK) phosphorylation and degradation, and release of NF-kappa-B proteins for nuclear translocation. Its binding to DPP4 induces T-cell proliferation and NF-kappa-B activation in a T-cell receptor/CD3-dependent manner. Promotes linear ubiquitination of BCL10 by promoting the targeting of BCL10 to RNF31/HOIP. Stimulates the phosphorylation of BCL10. Also activates the TORC1 signaling pathway. This is Caspase recruitment domain-containing protein 11 from Homo sapiens (Human).